Reading from the N-terminus, the 428-residue chain is 3-phosphoshikimate 1-carboxyvinyltransferase (428 aa).

K23, S24, and R28 together coordinate 3-phosphoshikimate. K23 serves as a coordination point for phosphoenolpyruvate. Phosphoenolpyruvate contacts are provided by G92 and R120. 3-phosphoshikimate-binding residues include S165, Q167, D312, and K339. Residue Q167 coordinates phosphoenolpyruvate. D312 (proton acceptor) is an active-site residue. The phosphoenolpyruvate site is built by R343 and R384.

The protein belongs to the EPSP synthase family. As to quaternary structure, monomer.

The protein resides in the cytoplasm. It carries out the reaction 3-phosphoshikimate + phosphoenolpyruvate = 5-O-(1-carboxyvinyl)-3-phosphoshikimate + phosphate. The protein operates within metabolic intermediate biosynthesis; chorismate biosynthesis; chorismate from D-erythrose 4-phosphate and phosphoenolpyruvate: step 6/7. Catalyzes the transfer of the enolpyruvyl moiety of phosphoenolpyruvate (PEP) to the 5-hydroxyl of shikimate-3-phosphate (S3P) to produce enolpyruvyl shikimate-3-phosphate and inorganic phosphate. This Sulfurimonas denitrificans (strain ATCC 33889 / DSM 1251) (Thiomicrospira denitrificans (strain ATCC 33889 / DSM 1251)) protein is 3-phosphoshikimate 1-carboxyvinyltransferase.